A 315-amino-acid chain; its full sequence is Ribose-phosphate pyrophosphokinase (315 aa).

Residues 37–39 (DGE) and 96–97 (RQ) each bind ATP. Residues His-131 and Asp-170 each coordinate Mg(2+). Lys-194 is a catalytic residue. D-ribose 5-phosphate is bound by residues Arg-196, Asp-220, and 224 to 228 (DTGGT).

It belongs to the ribose-phosphate pyrophosphokinase family. Class I subfamily. In terms of assembly, homohexamer. It depends on Mg(2+) as a cofactor.

It localises to the cytoplasm. The catalysed reaction is D-ribose 5-phosphate + ATP = 5-phospho-alpha-D-ribose 1-diphosphate + AMP + H(+). The protein operates within metabolic intermediate biosynthesis; 5-phospho-alpha-D-ribose 1-diphosphate biosynthesis; 5-phospho-alpha-D-ribose 1-diphosphate from D-ribose 5-phosphate (route I): step 1/1. Its function is as follows. Involved in the biosynthesis of the central metabolite phospho-alpha-D-ribosyl-1-pyrophosphate (PRPP) via the transfer of pyrophosphoryl group from ATP to 1-hydroxyl of ribose-5-phosphate (Rib-5-P). The protein is Ribose-phosphate pyrophosphokinase of Photorhabdus laumondii subsp. laumondii (strain DSM 15139 / CIP 105565 / TT01) (Photorhabdus luminescens subsp. laumondii).